Here is a 640-residue protein sequence, read N- to C-terminus: Threonine--tRNA ligase (640 aa).

The interval 224-525 (DHRKLGKELD…LTEHYAGAFP (302 aa)) is catalytic. Positions 323, 374, and 502 each coordinate Zn(2+).

It belongs to the class-II aminoacyl-tRNA synthetase family. Homodimer. Requires Zn(2+) as cofactor.

It is found in the cytoplasm. It catalyses the reaction tRNA(Thr) + L-threonine + ATP = L-threonyl-tRNA(Thr) + AMP + diphosphate + H(+). Its function is as follows. Catalyzes the attachment of threonine to tRNA(Thr) in a two-step reaction: L-threonine is first activated by ATP to form Thr-AMP and then transferred to the acceptor end of tRNA(Thr). Also edits incorrectly charged L-seryl-tRNA(Thr). The chain is Threonine--tRNA ligase from Tropheryma whipplei (strain TW08/27) (Whipple's bacillus).